We begin with the raw amino-acid sequence, 392 residues long: CD2 homolog (392 aa).

Residues 1–16 (MIIKLIFLICFKIVLS) form the signal peptide. The Extracellular portion of the chain corresponds to 17 to 222 (IDNKTKFNET…YLDFFQVTSY (206 aa)). N-linked (GlcNAc...) asparagine; by host glycosylation is found at Asn-39, Asn-88, Asn-92, Asn-106, Asn-148, Asn-159, Asn-183, Asn-191, Asn-198, and Asn-204. 2 disulfide bridges follow: Cys-137-Cys-205 and Cys-144-Cys-188. Residues 223–243 (IFYMIIFIVTGITVSILISII) traverse the membrane as a helical segment. Over 244-392 (TFLFIRKRKH…ISLIHVDRII (149 aa)) the chain is Cytoplasmic. Positions 258–290 (ESPPPESNEEEQQCHHDTTSIHEPSPREPLLPK) are disordered. Positions 269-283 (QQCHHDTTSIHEPSP) are enriched in basic and acidic residues. Tandem repeats lie at residues 319–324 (KPCPPP), 325–330 (KPCPPP), 331–336 (KPCPPP), 337–342 (KPCPPS), and 343–348 (KPCPPP). Residues 319–348 (KPCPPPKPCPPPKPCPPPKPCPPSKPCPPP) form a 5 X 6 AA tandem repeats of K-P-C-[PRS]-[P]-[PS] region. Positions 328 to 357 (PPPKPCPPPKPCPPSKPCPPPEPYSPPKPC) are disordered.

The protein belongs to the asfivirus CD2 homolog protein family. In terms of assembly, both glycosylated and nonglycosylated forms interact (via C-terminus) with the host AP-1 complex. In terms of processing, cleaved into two fragments of 63 kDa and 26 kDa containing respectively the glycosylated N-terminus and the nonglycosylated C-terminus. A full-length 89-kDa glycosylated form also exists.

Its subcellular location is the host cell membrane. It is found in the virion membrane. The protein localises to the host Golgi apparatus. Functionally, may play an immunosuppressive role by inhibiting lymphocyte proliferation and subsequently facilitating viral replication and generalization of infection. Responsible for viral hemadsorption, which may help viral spread. Increases virus replication in the tick vector at the step of virus uptake or replication in the tick gut. May play a role in the host Golgi reorganization to yield viral factories. May play a role in host cell penetration. This chain is CD2 homolog, found in Ornithodoros (relapsing fever ticks).